The following is a 366-amino-acid chain: Chorismate synthase (366 aa).

NADP(+) is bound by residues Arg-48 and Arg-54. FMN-binding positions include Arg-125–Ser-127, Asn-238–Ala-239, Gly-278, Lys-293–Ser-297, and Arg-319.

It belongs to the chorismate synthase family. As to quaternary structure, homotetramer. The cofactor is FMNH2.

It carries out the reaction 5-O-(1-carboxyvinyl)-3-phosphoshikimate = chorismate + phosphate. Its pathway is metabolic intermediate biosynthesis; chorismate biosynthesis; chorismate from D-erythrose 4-phosphate and phosphoenolpyruvate: step 7/7. Functionally, catalyzes the anti-1,4-elimination of the C-3 phosphate and the C-6 proR hydrogen from 5-enolpyruvylshikimate-3-phosphate (EPSP) to yield chorismate, which is the branch point compound that serves as the starting substrate for the three terminal pathways of aromatic amino acid biosynthesis. This reaction introduces a second double bond into the aromatic ring system. The polypeptide is Chorismate synthase (Cellvibrio japonicus (strain Ueda107) (Pseudomonas fluorescens subsp. cellulosa)).